The chain runs to 215 residues: UPF0502 protein Shew_1617 (215 aa).

This sequence belongs to the UPF0502 family.

This Shewanella loihica (strain ATCC BAA-1088 / PV-4) protein is UPF0502 protein Shew_1617.